The chain runs to 838 residues: Calmodulin-binding transcription activator 6 (838 aa).

The CG-1 DNA-binding region spans 25 to 134 (VQTMLEEAKS…YRDTQEAATT (110 aa)). The ANK repeat unit spans residues 525 to 554 (QGWTALHWAAYYGREKMVAALLSAGARPNL). 3 consecutive IQ domains span residues 671–700 (SIIA…IQCR), 713–742 (MRRQ…SVGV), and 788–817 (LERS…THEE). Residues 738–760 (WSVGVLEKAVLRWRQKRKGFRGL) form a calmodulin-binding region. Residues 802–822 (KKAQQDYRRMKLTHEEAQVNH) are a coiled coil.

Belongs to the CAMTA family. As to expression, expressed in roots, stems, leaves, sepals, petals, stamen filaments, top of carpels, anthers and siliques, but not in stigmas.

Its subcellular location is the nucleus. Transcription activator that binds calmodulin in a calcium-dependent manner in vitro. Binds to the DNA consensus sequence 5'-[ACG]CGCG[GTC]-3'. Regulates transcriptional activity in response to calcium signals. This chain is Calmodulin-binding transcription activator 6, found in Arabidopsis thaliana (Mouse-ear cress).